A 735-amino-acid polypeptide reads, in one-letter code: Nuclear intron maturase 2, mitochondrial (735 aa).

A mitochondrion-targeting transit peptide spans 1-12; sequence MRRSFSVLGPYK. The Reverse transcriptase domain maps to 161–460; that stretch reads RDKTDYESLS…KGIMFLDHVL (300 aa). The interval 485 to 653 is intron maturase type-2; the sequence is GTLLSVTASL…KFLIEYLTLD (169 aa). Residues 707–735 are disordered; it reads SSTYNRDNDDQKNKEEDEDSEDGLRIARM. Basic and acidic residues predominate over residues 712–721; the sequence is RDNDDQKNKE.

It belongs to the plant nuclear intron maturase (nMat) family. As to quaternary structure, associated to a large ribonucleoprotein complex in mitochondria containing group-II intron RNAs.

It is found in the mitochondrion. Its function is as follows. Nuclear-encoded maturase required for splicing of group-II introns in mitochondria. Involved in the splicing of mitochondrial COX2, NAD1 and NAD7 transcripts. Necessary for mitochondrial biogenesis during early developmental stages. In Arabidopsis thaliana (Mouse-ear cress), this protein is Nuclear intron maturase 2, mitochondrial.